Reading from the N-terminus, the 181-residue chain is Probable pyruvoyl-dependent arginine decarboxylase (181 aa).

Pyruvic acid (Ser) is present on serine 43.

It belongs to the PdaD family. Pyruvate serves as cofactor.

It catalyses the reaction L-arginine + H(+) = agmatine + CO2. The polypeptide is Probable pyruvoyl-dependent arginine decarboxylase (Chlorobaculum tepidum (strain ATCC 49652 / DSM 12025 / NBRC 103806 / TLS) (Chlorobium tepidum)).